Here is a 409-residue protein sequence, read N- to C-terminus: Nucleoprotein (409 aa).

Disordered regions lie at residues methionine 1 to lysine 64 and arginine 167 to aspartate 197. The interval glycine 30–leucine 161 is RNA-binding. The 126-residue stretch at glycine 32–aspartate 157 folds into the CoV N NTD domain. Residues glutamate 176–aspartate 197 are compositionally biased toward basic and acidic residues. Serine 192 carries the post-translational modification Phosphoserine; by host. The region spanning serine 217 to proline 333 is the CoV N CTD domain. Positions lysine 228–aspartate 335 are dimerization. Residues cysteine 322 and cysteine 325 are joined by a disulfide bond. The segment at aspartate 327–isoleucine 409 is disordered. A compositionally biased stretch (basic and acidic residues) spans arginine 332 to asparagine 349. The residue at position 374 (threonine 374) is a Phosphothreonine; by host.

This sequence belongs to the gammacoronavirus nucleocapsid protein family. In terms of assembly, homooligomer. Both monomeric and oligomeric forms interact with RNA. Interacts with protein M. Interacts with NSP3; this interaction serves to tether the genome to the newly translated replicase-transcriptase complex at a very early stage of infection. ADP-ribosylated. The ADP-ribosylation is retained in the virion during infection. Post-translationally, phosphorylated on serine and threonine residues.

It localises to the virion. Its subcellular location is the host endoplasmic reticulum-Golgi intermediate compartment. The protein localises to the host Golgi apparatus. In terms of biological role, packages the positive strand viral genome RNA into a helical ribonucleocapsid (RNP) and plays a fundamental role during virion assembly through its interactions with the viral genome and membrane protein M. Plays an important role in enhancing the efficiency of subgenomic viral RNA transcription as well as viral replication. The chain is Nucleoprotein from Gallus gallus (Chicken).